Reading from the N-terminus, the 502-residue chain is Probable cytosol aminopeptidase (502 aa).

Positions 258 and 263 each coordinate Mn(2+). Lys270 is a catalytic residue. Mn(2+) is bound by residues Asp281, Asp340, and Glu342. Arg344 is an active-site residue.

Belongs to the peptidase M17 family. Mn(2+) is required as a cofactor.

It localises to the cytoplasm. The enzyme catalyses Release of an N-terminal amino acid, Xaa-|-Yaa-, in which Xaa is preferably Leu, but may be other amino acids including Pro although not Arg or Lys, and Yaa may be Pro. Amino acid amides and methyl esters are also readily hydrolyzed, but rates on arylamides are exceedingly low.. It catalyses the reaction Release of an N-terminal amino acid, preferentially leucine, but not glutamic or aspartic acids.. Its function is as follows. Presumably involved in the processing and regular turnover of intracellular proteins. Catalyzes the removal of unsubstituted N-terminal amino acids from various peptides. This chain is Probable cytosol aminopeptidase, found in Clavibacter michiganensis subsp. michiganensis (strain NCPPB 382).